Here is a 160-residue protein sequence, read N- to C-terminus: SsrA-binding protein (160 aa).

Residues 132-160 form a disordered region; the sequence is KEFDKRDTMRERDSNRELQRAVRNKGKEE.

It belongs to the SmpB family.

The protein localises to the cytoplasm. In terms of biological role, required for rescue of stalled ribosomes mediated by trans-translation. Binds to transfer-messenger RNA (tmRNA), required for stable association of tmRNA with ribosomes. tmRNA and SmpB together mimic tRNA shape, replacing the anticodon stem-loop with SmpB. tmRNA is encoded by the ssrA gene; the 2 termini fold to resemble tRNA(Ala) and it encodes a 'tag peptide', a short internal open reading frame. During trans-translation Ala-aminoacylated tmRNA acts like a tRNA, entering the A-site of stalled ribosomes, displacing the stalled mRNA. The ribosome then switches to translate the ORF on the tmRNA; the nascent peptide is terminated with the 'tag peptide' encoded by the tmRNA and targeted for degradation. The ribosome is freed to recommence translation, which seems to be the essential function of trans-translation. The protein is SsrA-binding protein of Pseudomonas putida (strain ATCC 47054 / DSM 6125 / CFBP 8728 / NCIMB 11950 / KT2440).